Here is a 198-residue protein sequence, read N- to C-terminus: WYSGMFAPNIKQEPISHHHHHHHAHHSHHQHPHDSNSNSNASSPHQSPLPSPNPPSNTILQLEQYLKQQQQQQQQQQQQQQQQPMDTLCAAAMTPSPSNNDQNSPLMPPGLPNPMQSIMPANLRPCPTATTTTTPAAAAPTTTAATIVLQANDKLQALTPPMDVTPPKSPAKSQQSCAEPEKEHDLMSNSSEDMKYMA.

Disordered regions lie at residues 16-116 (SHHH…NPMQ) and 158-198 (LTPP…KYMA). Basic residues predominate over residues 17–31 (HHHHHHHAHHSHHQH). Low complexity-rich tracts occupy residues 35–46 (SNSNSNASSPHQ) and 68–83 (QQQQ…QQQQ). Polar residues predominate over residues 95-105 (PSPSNNDQNSP). The span at 179–198 (EPEKEHDLMSNSSEDMKYMA) shows a compositional bias: basic and acidic residues.

It belongs to the hunchback C2H2-type zinc-finger protein family.

The protein resides in the nucleus. Functionally, gap class segmentation protein that controls development of head structures. This chain is Protein hunchback (hb), found in Drosophila cyrtoloma (Fruit fly).